The chain runs to 102 residues: Small ribosomal subunit protein uS10 (102 aa).

It belongs to the universal ribosomal protein uS10 family. Part of the 30S ribosomal subunit.

Functionally, involved in the binding of tRNA to the ribosomes. This Parafrankia sp. (strain EAN1pec) protein is Small ribosomal subunit protein uS10.